We begin with the raw amino-acid sequence, 447 residues long: N-succinylarginine dihydrolase (447 aa).

Residues 19–28 (AGLSFGNEAS), Asn-110, and 137–138 (HR) each bind substrate. The active site involves Glu-174. Arg-212 is a binding site for substrate. Residue His-248 is part of the active site. Substrate contacts are provided by Asp-250 and Asn-359. Cys-365 acts as the Nucleophile in catalysis.

Belongs to the succinylarginine dihydrolase family. As to quaternary structure, homodimer.

The catalysed reaction is N(2)-succinyl-L-arginine + 2 H2O + 2 H(+) = N(2)-succinyl-L-ornithine + 2 NH4(+) + CO2. The protein operates within amino-acid degradation; L-arginine degradation via AST pathway; L-glutamate and succinate from L-arginine: step 2/5. Functionally, catalyzes the hydrolysis of N(2)-succinylarginine into N(2)-succinylornithine, ammonia and CO(2). This is N-succinylarginine dihydrolase from Salmonella schwarzengrund (strain CVM19633).